A 253-amino-acid polypeptide reads, in one-letter code: Chloride intracellular channel protein 4 (253 aa).

Alanine 2 bears the N-acetylalanine mark. Positions alanine 2–proline 101 are required for insertion into the membrane. Residue serine 4 is modified to Phosphoserine. Lysine 24 bears the N6-acetyllysine mark. Residues phenylalanine 37–valine 57 form a helical membrane-spanning segment. The GST C-terminal domain occupies asparagine 81–tyrosine 244. Lysine 130 carries the post-translational modification N6-acetyllysine. A phosphoserine mark is found at serine 132, serine 167, and serine 236. At tyrosine 244 the chain carries Phosphotyrosine.

This sequence belongs to the chloride channel CLIC family. Monomer. Interacts with HRH3.

The protein localises to the cytoplasm. It localises to the cytoskeleton. Its subcellular location is the microtubule organizing center. It is found in the centrosome. The protein resides in the cytoplasmic vesicle membrane. The protein localises to the nucleus. It localises to the cell membrane. Its subcellular location is the mitochondrion. It is found in the cell junction. It carries out the reaction chloride(in) = chloride(out). The enzyme catalyses thiocyanate(in) = thiocyanate(out). The catalysed reaction is nitrate(in) = nitrate(out). It catalyses the reaction iodide(out) = iodide(in). It carries out the reaction bromide(in) = bromide(out). The enzyme catalyses fluoride(in) = fluoride(out). The catalysed reaction is choline(out) = choline(in). Its function is as follows. In the soluble state, catalyzes glutaredoxin-like thiol disulfide exchange reactions with reduced glutathione as electron donor. Can insert into membranes and form voltage-dependent multi-ion conductive channels. Membrane insertion seems to be redox-regulated and may occur only under oxidizing conditions. Has alternate cellular functions like a potential role in angiogenesis or in maintaining apical-basolateral membrane polarity during mitosis and cytokinesis. Could also promote endothelial cell proliferation and regulate endothelial morphogenesis (tubulogenesis). Promotes cell-surface expression of HRH3. In Pongo abelii (Sumatran orangutan), this protein is Chloride intracellular channel protein 4 (CLIC4).